We begin with the raw amino-acid sequence, 439 residues long: UDP-N-acetylmuramoylalanine--D-glutamate ligase (439 aa).

Residue Gly112–Thr118 coordinates ATP.

This sequence belongs to the MurCDEF family.

The protein resides in the cytoplasm. The catalysed reaction is UDP-N-acetyl-alpha-D-muramoyl-L-alanine + D-glutamate + ATP = UDP-N-acetyl-alpha-D-muramoyl-L-alanyl-D-glutamate + ADP + phosphate + H(+). It participates in cell wall biogenesis; peptidoglycan biosynthesis. Its function is as follows. Cell wall formation. Catalyzes the addition of glutamate to the nucleotide precursor UDP-N-acetylmuramoyl-L-alanine (UMA). This Mannheimia succiniciproducens (strain KCTC 0769BP / MBEL55E) protein is UDP-N-acetylmuramoylalanine--D-glutamate ligase.